The chain runs to 179 residues: ATP synthase subunit delta (179 aa).

The protein belongs to the ATPase delta chain family. F-type ATPases have 2 components, F(1) - the catalytic core - and F(0) - the membrane proton channel. F(1) has five subunits: alpha(3), beta(3), gamma(1), delta(1), epsilon(1). F(0) has three main subunits: a(1), b(2) and c(10-14). The alpha and beta chains form an alternating ring which encloses part of the gamma chain. F(1) is attached to F(0) by a central stalk formed by the gamma and epsilon chains, while a peripheral stalk is formed by the delta and b chains.

It is found in the cell inner membrane. F(1)F(0) ATP synthase produces ATP from ADP in the presence of a proton or sodium gradient. F-type ATPases consist of two structural domains, F(1) containing the extramembraneous catalytic core and F(0) containing the membrane proton channel, linked together by a central stalk and a peripheral stalk. During catalysis, ATP synthesis in the catalytic domain of F(1) is coupled via a rotary mechanism of the central stalk subunits to proton translocation. Its function is as follows. This protein is part of the stalk that links CF(0) to CF(1). It either transmits conformational changes from CF(0) to CF(1) or is implicated in proton conduction. The protein is ATP synthase subunit delta of Bordetella avium (strain 197N).